We begin with the raw amino-acid sequence, 69 residues long: uncharacterized protein (69 aa).

Positions 23–46 are disordered; the sequence is AENEGNRKENRRQMQSRNERGCNV. Positions 26–44 are enriched in basic and acidic residues; that stretch reads EGNRKENRRQMQSRNERGC.

This is an uncharacterized protein from Homo sapiens (Human).